The chain runs to 380 residues: Flap endonuclease 1 (380 aa).

Residues 1–104 (MGIQGLAKLI…GELAKRAERR (104 aa)) are N-domain. Position 34 (Asp-34) interacts with Mg(2+). 2 residues coordinate DNA: Arg-47 and Arg-70. 5 residues coordinate Mg(2+): Asp-86, Glu-158, Glu-160, Asp-179, and Asp-181. Residues 122–253 (DVNKFQKRLV…KRAIELIRQY (132 aa)) form an I-domain region. Position 158 (Glu-158) interacts with DNA. 2 residues coordinate DNA: Gly-231 and Asp-233. Asp-233 is a binding site for Mg(2+). Residues 328–380 (LKNARHTSTQGRLDSFFKVMSSPSVKRKEPPKGAKGSASKKAKMSGGKFKKPK) form a disordered region. The interaction with PCNA stretch occupies residues 336–344 (TQGRLDSFF). Residues 365–380 (ASKKAKMSGGKFKKPK) are compositionally biased toward basic residues.

The protein belongs to the XPG/RAD2 endonuclease family. FEN1 subfamily. Interacts with PCNA. Three molecules of FEN1 bind to one PCNA trimer with each molecule binding to one PCNA monomer. PCNA stimulates the nuclease activity without altering cleavage specificity. Mg(2+) serves as cofactor. Post-translationally, phosphorylated. Phosphorylation upon DNA damage induces relocalization to the nuclear plasma.

It is found in the nucleus. It localises to the nucleolus. The protein resides in the nucleoplasm. The protein localises to the mitochondrion. In terms of biological role, structure-specific nuclease with 5'-flap endonuclease and 5'-3' exonuclease activities involved in DNA replication and repair. During DNA replication, cleaves the 5'-overhanging flap structure that is generated by displacement synthesis when DNA polymerase encounters the 5'-end of a downstream Okazaki fragment. It enters the flap from the 5'-end and then tracks to cleave the flap base, leaving a nick for ligation. Also involved in the long patch base excision repair (LP-BER) pathway, by cleaving within the apurinic/apyrimidinic (AP) site-terminated flap. Acts as a genome stabilization factor that prevents flaps from equilibrating into structures that lead to duplications and deletions. Also possesses 5'-3' exonuclease activity on nicked or gapped double-stranded DNA, and exhibits RNase H activity. Also involved in replication and repair of rDNA and in repairing mitochondrial DNA. The sequence is that of Flap endonuclease 1 from Branchiostoma floridae (Florida lancelet).